The following is a 778-amino-acid chain: MDKFWWHTAWGLCLLQLSLAHQQIDLNVTCRYAGVFHVEKNGRYSISRTEAADLCQAFNSTLPTMDQMKLALSKGFETCRYGFIEGNVVIPRIHPNAICAANHTGVYILVTSNTSHYDTYCFNASAPPEEDCTSVTDLPNSFDGPVTITIVNRDGTRYSKKGEYRTHQEDIDASNIIDDDVSSGSTIEKSTPEGYILHTYLPTEQPTGDQDDSFFIRSTLATIASTVHSKSHAAAQKQNNWIWSWFGNSQSTTQTQEPTTSATTALMTTPETPPKRQEAQNWFSWLFQPSESKSHLHTTTKMPGTESNTNPTGWEPNEENEDETDTYPSFSGSGIDDDEDFISSTIATTPRVSARTEDNQDWTQWKPNHSNPEVLLQTTTRMADIDRISTSAHGENWTPEPQPPFNNHEYQDEEETPHATSTTPNSTAEAAATQQETWFQNGWQGKNPPTPSEDSHVTEGTTASAHNNHPSQRITTQSQEDVSWTDFFDPISHPMGQGHQTESKDTDSSHSTTLQPTAAPNTHLVEDLNRTGPLSVTTPQSHSQNFSTLHGEPEEDENYPTTSILPSSTKSSAKDARRGGSLPTDTTTSVEGYTFQYPDTMENGTLFPVTPAKTEVFGETEVTLATDSNVNVDGSLPGDRDSSKDSRGSSRTVTHGSELAGHSSANQDSGVTTTSGPMRRPQIPEWLIILASLLALALILAVCIAVNSRRRCGQKKKLVINGGNGTVEDRKPSELNGEASKSQEMVHLVNKEPSETPDQCMTADETRNLQSVDMKIGV.

The N-terminal stretch at 1–22 (MDKFWWHTAWGLCLLQLSLAHQ) is a signal peptide. Residues 23–685 (QIDLNVTCRY…GPMRRPQIPE (663 aa)) lie on the Extracellular side of the membrane. A glycan (N-linked (GlcNAc...) asparagine) is linked at asparagine 27. 3 disulfides stabilise this stretch: cysteine 30–cysteine 132, cysteine 55–cysteine 121, and cysteine 79–cysteine 99. The Link domain maps to 34 to 123 (GVFHVEKNGR…TSHYDTYCFN (90 aa)). Arginine 43 lines the hyaluronan pocket. An N-linked (GlcNAc...) asparagine glycan is attached at asparagine 59. The hyaluronan site is built by arginine 80 and tyrosine 81. Residue asparagine 102 is glycosylated (N-linked (GlcNAc...) asparagine). Tyrosine 107 serves as a coordination point for hyaluronan. Residues asparagine 113 and asparagine 123 are each glycosylated (N-linked (GlcNAc...) asparagine). Serine 183 is a glycosylation site (O-linked (Xyl...) (chondroitin sulfate) serine). Residues 227–685 (VHSKSHAAAQ…GPMRRPQIPE (459 aa)) form a stem region. A compositionally biased stretch (low complexity) spans 251 to 270 (STTQTQEPTTSATTALMTTP). Disordered regions lie at residues 251 to 277 (STTQ…PKRQ), 293 to 338 (KSHL…IDDD), 351 to 370 (RVSA…PNHS), and 391 to 591 (SAHG…TSVE). The segment covering 293-312 (KSHLHTTTKMPGTESNTNPT) has biased composition (polar residues). Positions 316–325 (PNEENEDETD) are enriched in acidic residues. The span at 361 to 370 (DWTQWKPNHS) shows a compositional bias: polar residues. An N-linked (GlcNAc...) asparagine glycan is attached at asparagine 368. Tyrosine 410 is modified (sulfotyrosine). Residue asparagine 425 is glycosylated (N-linked (GlcNAc...) asparagine). Over residues 427–437 (TAEAAATQQET) the composition is skewed to low complexity. Polar residues-rich tracts occupy residues 458–482 (TEGT…QEDV) and 509–520 (SHSTTLQPTAAP). 2 N-linked (GlcNAc...) asparagine glycosylation sites follow: asparagine 529 and asparagine 545. 2 stretches are compositionally biased toward polar residues: residues 532 to 548 (GPLS…NFST) and 559 to 571 (YPTT…STKS). Asparagine 603 is a glycosylation site (N-linked (GlcNAc...) asparagine). Positions 628-678 (SNVNVDGSLPGDRDSSKDSRGSSRTVTHGSELAGHSSANQDSGVTTTSGPM) are disordered. Basic and acidic residues predominate over residues 638-648 (GDRDSSKDSRG). The span at 663–676 (SSANQDSGVTTTSG) shows a compositional bias: polar residues. Residues 686 to 706 (WLIILASLLALALILAVCIAV) traverse the membrane as a helical segment. The Cytoplasmic segment spans residues 707–778 (NSRRRCGQKK…LQSVDMKIGV (72 aa)). Residue serine 708 is modified to Phosphoserine; by PKC. The tract at residues 709–727 (RRRCGQKKKLVINGGNGTV) is required for interaction with EZR, MSN and RDX and for the co-localization to microvilli. Residue threonine 726 is modified to Phosphothreonine. 2 positions are modified to phosphoserine: serine 733 and serine 742.

In terms of assembly, interacts with PKN2. Interacts with TIAM1 and TIAM2. Interacts with HA, as well as other glycosaminoglycans, collagen, laminin, and fibronectin via its N-terminal segment. Interacts with UNC119. Interacts with PDPN (via extracellular domain); this interaction is required for PDPN-mediated directional migration and regulation of lamellipodia extension/stabilization during cell spreading and migration. Interacts with RDX, EZR and MSN (via FERM domain). Interacts with EGFR. Interacts with CD74; this complex is essential for the MIF-induced signaling cascade that results in B cell survival. Post-translationally, N-glycosylated. O-glycosylated; contains chondroitin sulfate glycans which can be more or less sulfated. In terms of processing, phosphorylated; activation of PKC results in the dephosphorylation of Ser-742 (constitutive phosphorylation site), and the phosphorylation of Ser-708. In terms of tissue distribution, expressed in the intestinal epithelium.

The protein localises to the cell membrane. The protein resides in the cell projection. It localises to the microvillus. It is found in the secreted. Its function is as follows. Cell-surface receptor that plays a role in cell-cell interactions, cell adhesion and migration, helping them to sense and respond to changes in the tissue microenvironment. Participates thereby in a wide variety of cellular functions including the activation, recirculation and homing of T-lymphocytes, hematopoiesis, inflammation and response to bacterial infection. Engages, through its ectodomain, extracellular matrix components such as hyaluronan/HA, collagen, growth factors, cytokines or proteases and serves as a platform for signal transduction by assembling, via its cytoplasmic domain, protein complexes containing receptor kinases and membrane proteases. Such effectors include PKN2, the RhoGTPases RAC1 and RHOA, Rho-kinases and phospholipase C that coordinate signaling pathways promoting calcium mobilization and actin-mediated cytoskeleton reorganization essential for cell migration and adhesion. In Mus musculus (Mouse), this protein is CD44 antigen (Cd44).